The sequence spans 314 residues: DNA-directed RNA polymerase subunit alpha (314 aa).

Positions 1 to 228 (MIEFEKPKIH…EHLAIFVNLN (228 aa)) are alpha N-terminal domain (alpha-NTD). Positions 245–314 (KEKMLEMTIE…LLGLGFRSED (70 aa)) are alpha C-terminal domain (alpha-CTD).

The protein belongs to the RNA polymerase alpha chain family. Homodimer. The RNAP catalytic core consists of 2 alpha, 1 beta, 1 beta' and 1 omega subunit. When a sigma factor is associated with the core the holoenzyme is formed, which can initiate transcription.

The catalysed reaction is RNA(n) + a ribonucleoside 5'-triphosphate = RNA(n+1) + diphosphate. In terms of biological role, DNA-dependent RNA polymerase catalyzes the transcription of DNA into RNA using the four ribonucleoside triphosphates as substrates. This chain is DNA-directed RNA polymerase subunit alpha, found in Pediococcus pentosaceus (strain ATCC 25745 / CCUG 21536 / LMG 10740 / 183-1w).